The primary structure comprises 1404 residues: ABC transporter G family member 47 (1404 aa).

Residues 156-423 form the ABC transporter 1 domain; it reads GNALHITRKK…FQSIGFKCPE (268 aa). ATP is bound at residue 189–196; sequence GPPGSGKT. An ABC transmembrane type-2 1 domain is found at 501-714; that stretch reads ELLQANIDRE…ALNTLAVNEF (214 aa). 7 consecutive transmembrane segments (helical) span residues 519–539, 565–585, 607–627, 638–658, 663–683, 692–712, and 751–771; these read FLYI…MTVF, MIMF…PVFF, TPIS…VIGF, FLAL…IASL, VVAS…SGFI, WWIW…LAVN, and VGAL…CLIF. The region spanning 808 to 1059 is the ABC transporter 2 domain; that stretch reads ITFEDIKYSI…ELIRYFEAIE (252 aa). 852-859 provides a ligand contact to ATP; it reads GVSGAGKT. The 215-residue stretch at 1132–1346 folds into the ABC transmembrane type-2 2 domain; sequence TQCLACLWKQ…TLNGLVTSQF (215 aa). A run of 7 helical transmembrane segments spans residues 1152-1172, 1183-1199, 1239-1259, 1266-1286, 1298-1318, 1321-1341, and 1373-1393; these read IAVK…MFWG, LFSA…TMGV, LPYI…MIGY, FFWY…YGMM, TVVS…LIPL, IPIW…LNGL, and LLWV…FLFG.

It belongs to the ABC transporter superfamily. ABCG family. PDR (TC 3.A.1.205) subfamily.

Its subcellular location is the membrane. Functionally, may be a general defense protein. This chain is ABC transporter G family member 47, found in Oryza sativa subsp. japonica (Rice).